Reading from the N-terminus, the 192-residue chain is dCTP deaminase, dUMP-forming (192 aa).

DCTP-binding positions include 101 to 106, Asp119, 127 to 129, Gln148, Tyr162, and Gln174; these read KSSLGR and TLE. Residue Glu129 is the Proton donor/acceptor of the active site. The tract at residues 165–184 is disordered; that stretch reads GAYGNRYQGQRGPTASRSHL. Residues 171 to 183 show a composition bias toward polar residues; sequence YQGQRGPTASRSH.

It belongs to the dCTP deaminase family. In terms of assembly, homotrimer.

The catalysed reaction is dCTP + 2 H2O = dUMP + NH4(+) + diphosphate. Its pathway is pyrimidine metabolism; dUMP biosynthesis; dUMP from dCTP: step 1/1. In terms of biological role, bifunctional enzyme that catalyzes both the deamination of dCTP to dUTP and the hydrolysis of dUTP to dUMP without releasing the toxic dUTP intermediate. The protein is dCTP deaminase, dUMP-forming of Kocuria rhizophila (strain ATCC 9341 / DSM 348 / NBRC 103217 / DC2201).